A 1256-amino-acid chain; its full sequence is Bifunctional autolysin (1256 aa).

Residues 1–29 (MAKKFNYKLPSMVALTLVGSAVTAHQVQA) form the signal peptide. Residues 103-138 (GDTRANQSATTNNTQPVAKSTSTTAPKTNTNVTNAG) show a composition bias toward polar residues. 3 disordered regions span residues 103 to 151 (GDTR…NSEN), 173 to 219 (AAAP…KYKP), and 419 to 440 (TQSTTTPTTPSKPTTPSKPSTG). 2 stretches are compositionally biased toward low complexity: residues 173–196 (AAAPKAATTSAPKAKTEATPKVTT) and 421–439 (STTTPTTPSKPTTPSKPST). The segment at 199 to 775 (ASAQPRSVAA…AVAQPKTAVK (577 aa)) is N-acetylmuramoyl-L-alanine amidase. GW domains follow at residues 443–517 (TVAA…YNTA), 519–593 (SPVN…DTAK), 612–686 (TVSS…YNNA), 688–762 (SPVN…VPAA), 784–859 (TTQT…VQNL), 861–936 (KEVK…APTA), and 943–1017 (AAKD…KELI). The tract at residues 776 to 1256 (AYTVTKPQTT…GKYFDIPQYK (481 aa)) is endo-beta-N-acetylglucosaminidase.

The protein in the N-terminal section; belongs to the N-acetylmuramoyl-L-alanine amidase 2 family. In the C-terminal section; belongs to the glycosyl hydrolase 73 family. As to quaternary structure, oligomer; forms a ring structure at the cell surface which is important for efficient partitioning of daughter cells after cell division. Undergoes proteolytic processing to generate the two extracellular lytic enzymes, probably at the septal region on the cell surface.

It is found in the secreted. The enzyme catalyses Hydrolyzes the link between N-acetylmuramoyl residues and L-amino acid residues in certain cell-wall glycopeptides.. It carries out the reaction an N(4)-(oligosaccharide-(1-&gt;3)-[oligosaccharide-(1-&gt;6)]-beta-D-Man-(1-&gt;4)-beta-D-GlcNAc-(1-&gt;4)-alpha-D-GlcNAc)-L-asparaginyl-[protein] + H2O = an oligosaccharide-(1-&gt;3)-[oligosaccharide-(1-&gt;6)]-beta-D-Man-(1-&gt;4)-D-GlcNAc + N(4)-(N-acetyl-beta-D-glucosaminyl)-L-asparaginyl-[protein]. Its function is as follows. Endohydrolysis of the di-N-acetylchitobiosyl unit in high-mannose glycopeptides and glycoproteins containing the -[(Man)5(GlcNAc)2]-Asn structure. One N-acetyl-D-glucosamine residue remains attached to the protein; the rest of the oligosaccharide is released intact. Cleaves the peptidoglycan connecting the daughter cells at the end of the cell division cycle, resulting in the separation of the two newly divided cells. Acts as an autolysin in penicillin-induced lysis. The protein is Bifunctional autolysin (atl) of Staphylococcus aureus (strain MW2).